We begin with the raw amino-acid sequence, 959 residues long: MANPQEHLSCSSLPHLPLTENKTSGGRNELAAMGNHPSPKLPEDPQERGAIQSELMEITGSPISTTVLTSVSEDSRGQFENSVLQLREQDESEMTLSLGNSNTVDGENTNGPEDIKIQFSRSGSGSGGFLEGLFGCLRPVWNIIGKAYSTDYKLQQQDTWEVPFEEISELQWLGSGAQGAVFLGKFRAEEVAIKKVREQNETDIKHLRKLKHPNIIAFKGVCTQAPCYCIIMEYCAHGQLYEVLRAGRKITPRLLVDWSTGIASGMNYLHLHKIIHRDLKSPNVLVTHTDAVKISDFGTSKELSDKSTKMSFAGTVAWMAPEVIRNEPVSEKVDIWSFGVVLWELLTGEIPYKDVDSSAIIWGVGSNSLHLPVPSTCPDGFKILMKQTWQSKPRNRPSFRQTLMHLDIASADVLATPQETYFKSQAEWREEVKKHFEKIKSEGTCIHRLDEELIRRRREELRHALDIREHYERKLERANNLYMELSAIMLQLEMREKELLKREQAVEKKYPGTYKRHPVRPIIHPNAMEKLMKRKGVPHKAGVQTKRPDLLRSEGIPSTEAVPTASPLSGSPKMSTASSRSRYRSKPRHRRGNSRGSHSDFAAILKTQPAQENSPHPTYMHHTQAQCASVHQHNPLQQQYQQIPPAQPQSRHPRLNAHGQDIATCANNLRYFGPAAALRSPLSNHAQRQMPGSSPDLISTAMAADWRNSELDQDQVGPWGCCQAEPYDPCFQCRPEHSGSLDVPTTEPVGRSPDLSSSPAHNPLSGNAQGSERTGANGFSGCQSGISHQFTPPMLPQKTRPLQKSGDDSSEEEGEVDSEVEFPRRQRPHRCISSYQSYSTFSSENFSVSDGEEGNTSDHSNSPDESANRRQDRLAETLDDLLSQTPEAPIEISSHSDGLSDKECAVRRVKTQMSLGKLCAEERGYENPVQFGDSDCDSSEGECSDATVRTSKNYSSATW.

The interval 1–47 (MANPQEHLSCSSLPHLPLTENKTSGGRNELAAMGNHPSPKLPEDPQE) is disordered. Low complexity predominate over residues 7 to 18 (HLSCSSLPHLPL). A Protein kinase domain is found at 167–408 (ISELQWLGSG…FRQTLMHLDI (242 aa)). ATP is bound by residues 173 to 181 (LGSGAQGAV) and K194. Residue D278 is the Proton acceptor of the active site. 2 leucine-zipper regions span residues 432–453 (VKKH…DEEL) and 485–506 (LSAI…EQAV). 4 disordered regions span residues 533–599 (KRKG…GSHS), 739–828 (GSLD…RQRP), 842–902 (SSEN…LSDK), and 927–959 (NPVQ…SATW). Positions 566-577 (SPLSGSPKMSTA) are enriched in polar residues. Residues 581 to 593 (SRYRSKPRHRRGN) show a composition bias toward basic residues. 2 stretches are compositionally biased toward polar residues: residues 754–774 (DLSS…SERT) and 780–790 (SGCQSGISHQF). Residues 808-820 (DSSEEEGEVDSEV) show a composition bias toward acidic residues. Residues 866-876 (SANRRQDRLAE) show a composition bias toward basic and acidic residues. Acidic residues predominate over residues 934 to 943 (SDCDSSEGEC). Residues 947-959 (TVRTSKNYSSATW) show a composition bias toward polar residues.

It belongs to the protein kinase superfamily. STE Ser/Thr protein kinase family. MAP kinase kinase kinase subfamily. As to quaternary structure, homodimer; forms dimers through the leucine-zipper motif. Interacts with the C-terminus of MAPK8IP1 through the kinase catalytic domain. Binds PRDX3. Associates with the IKK complex through the kinase domain. It depends on Mg(2+) as a cofactor. Post-translationally, autophosphorylated on serine and threonine residues.

It is found in the cytoplasm. The protein localises to the membrane. It catalyses the reaction L-seryl-[protein] + ATP = O-phospho-L-seryl-[protein] + ADP + H(+). It carries out the reaction L-threonyl-[protein] + ATP = O-phospho-L-threonyl-[protein] + ADP + H(+). With respect to regulation, activated by autophosphorylation and homodimerization. Functionally, activates the JUN N-terminal pathway through activation of the MAP kinase kinase MAP2K7. Acts synergistically with PRDX3 to regulate the activation of NF-kappa-B in the cytosol. This activation is kinase-dependent and involves activating the IKK complex, the IKBKB-containing complex that phosphorylates inhibitors of NF-kappa-B. In Mus musculus (Mouse), this protein is Mitogen-activated protein kinase kinase kinase 13 (Map3k13).